The following is a 1486-amino-acid chain: MLYDKSLERDNCGFGLIAHIEGEPSHKVVRTAIHALARMQHRGAILADGKTGDGCGLLLQKPDRFFRIVAQERGWRLAKNYAVGMLFLNKDPELAAAARRIVEEELQRETLSIVGWRDVPTNEGVLGEIALSSLPRIEQIFVNAPAGWRPRDMERRLFIARRRIEKRLEADKDFYVCSLSNLVNIYKGLCMPTDLPRFYLDLADLRLESAICLFHQRFSTNTVPRWPLAQPFRYLAHNGEINTITGNRQWARARTYKFQTPLIPDLHDAAPFVNETGSDSSSMDNMLELLLAGGMDIIRAMRLLVPPAWQNNPDMDPELRAFFDFNSMHMEPWDGPAGIVMSDGRFAACNLDRNGLRPARYVITKDKLITCASEVGIWDYQPDEVVEKGRVGPGELMVIDTRSGRILHSAETDDDLKSRHPYKEWMEKNVRRLVPFEDLPDEEVGSRELDDDTLASYQKQFNYSAEELDSVIRVLGENGQEAVGSMGDDTPFAVLSSQPRIIYDYFRQQFAQVTNPPIDPLREAHVMSLATSIGREMNVFCEAEGQAHRLSFKSPILLYSDFKQLTTMKEEHYRADTLDITFDVTKTTLEATVKELCDKAEKMVRSGTVLLVLSDRNIAKDRLPVPAPMAVGAIQTRLVDQSLRCDANIIVETASARDPHHFAVLLGFGATAIYPYLAYETLGRLVDTHAIAKDYRTVMLNYRNGINKGLYKIMSKMGISTIASYRCSKLFEAVGLHDDVVGLCFQGAVSRIGGASFEDFQQDLLNLSKRAWLARKPISQGGLLKYVHGGEYHAYNPDVVRTLQQAVQSGEYSDYQEYAKLVNERPATTLRDLLAITPGENAVNIADVEPASELFKRFDTAAMSIGALSPEAHEALAEAMNSIGGNSNSGEGGEDPARYGTNKVSRIKQVASGRFGVTPAYLVNADVIQIKVAQGAKPGEGGQLPGDKVTPYIAKLRYSVPGVTLISPPPHHDIYSIEDLAQLIFDLKQVNPKAMISVKLVSEPGVGTIATGVAKAYADLITIAGYDGGTGASPLSSVKYAGCPWELGLVETQQALVANGLRHKIRLQVDGGLKTGVDIIKAAILGAESFGFGTGPMVALGCKYLRICHLNNCATGVATQDDKLRKNHYHGLPFKVTNYFEFIARETRELMAQLGVTRLVDLIGRTDLLKELDGFTAKQQKLALSKLLETAEPHPGKALYCTENNPPFDNGLLNAQLLQQAKPFVDERQSKTFWFDIRNTDRSVGASLSGYIAQTHGDQGLAADPIKAYFNGTAGQSFGVWNAGGVELYLTGDANDYVGKGMAGGLIAIRPPVGSAFRSHEASIIGNTCLYGATGGRLYAAGRAGERFGVRNSGAITVVEGIGDNGCEYMTGGIVCILGKTGVNFGAGMTGGFAYVLDESGDFRKRVNPELVEVLSVDALAIHEEHLRGLITEHVQHTGSQRGEEILANWSTFATKFALVKPKSSDVKALLGHRSRSAAELRVQAQ.

Residues 1-11 constitute a propeptide that is removed on maturation; the sequence is MLYDKSLERDN. Cys-12 (nucleophile) is an active-site residue. In terms of domain architecture, Glutamine amidotransferase type-2 spans 12–402; the sequence is CGFGLIAHIE…PGELMVIDTR (391 aa). 1049 to 1101 is an FMN binding site; that stretch reads LVETQQALVANGLRHKIRLQVDGGLKTGVDIIKAAILGAESFGFGTGPMVALG. Residues Cys-1102, Cys-1108, and Cys-1113 each coordinate [3Fe-4S] cluster.

The protein belongs to the glutamate synthase family. As to quaternary structure, aggregate of 4 catalytic active heterodimers, consisting of a large and a small subunit. [3Fe-4S] cluster is required as a cofactor. It depends on FAD as a cofactor. The cofactor is FMN.

It catalyses the reaction 2 L-glutamate + NADP(+) = L-glutamine + 2-oxoglutarate + NADPH + H(+). It participates in amino-acid biosynthesis; L-glutamate biosynthesis via GLT pathway; L-glutamate from 2-oxoglutarate and L-glutamine (NADP(+) route): step 1/1. It functions in the pathway energy metabolism; nitrogen metabolism. Its function is as follows. Catalyzes the conversion of L-glutamine and 2-oxoglutarate into two molecules of L-glutamate. The polypeptide is Glutamate synthase [NADPH] large chain (gltB) (Escherichia coli (strain K12)).